Consider the following 128-residue polypeptide: DNA polymerase epsilon subunit 3 (128 aa).

Basic and acidic residues predominate over residues 98–110 (EKKESKASKKDSN). The segment at 98–128 (EKKESKASKKDSNTAENANASATATAEEAPE) is disordered. The segment covering 111–128 (TAENANASATATAEEAPE) has biased composition (low complexity).

In terms of assembly, homodimer. Component of the DNA polymerase epsilon complex consisting of four subunits: the catalytic subunit PolE1/DNApol-epsilon255 and the accessory subunits PolE2/DNApol-epsilon58, Chrac-14/DNApolE3 and PolE4. Component of the chromatin accessibility complex (CHRAC), composed of Chrac-14, Chrac-16, Acf and Iswi. Forms an heterodimer with Chrac-16. The Chrac-14/Chrac-16 heterodimer interacts with Acf (via N-terminus). Interacts directly with Iswi and this interaction is further stabilized by association with Chrac-16. Component of the Ada2a-containing (ATAC) complex composed of at least Ada2a, Atac1, Hcf, Ada3, Gcn5, Mocs2B, Charac-14, Atac3, Atac2, NC2beta and wds. Interacts with cid.

Its subcellular location is the nucleus. In terms of biological role, accessory component of the DNA polymerase epsilon complex. Participates in DNA repair and in chromosomal DNA replication. Histone-like protein which promotes nucleosome sliding of ATP-dependent nucleosome remodeling complexes. Part of the chromatin-accessibility complex (CHRAC) which uses energy/ATP to increase the general accessibility of DNA in chromatin. As a heterodimer with Chrac-16, binds DNA and facilitates nucleosome sliding by Acf. Has a role in DNA damage response by preventing cid mislocalization to chromatin. The protein is DNA polymerase epsilon subunit 3 of Drosophila melanogaster (Fruit fly).